Reading from the N-terminus, the 293-residue chain is Nucleotide-binding protein BA_5384/GBAA_5384/BAS5004 (293 aa).

14–21 (GMSGAGKT) serves as a coordination point for ATP. 65–68 (DLRG) is a GTP binding site.

It belongs to the RapZ-like family.

In terms of biological role, displays ATPase and GTPase activities. The protein is Nucleotide-binding protein BA_5384/GBAA_5384/BAS5004 of Bacillus anthracis.